The following is a 282-amino-acid chain: Phosphate import ATP-binding protein PstB (282 aa).

Residues 1 to 10 (MNMAESHLDP) show a composition bias toward basic and acidic residues. Positions 1-24 (MNMAESHLDPSKLATGPAGAGAAT) are disordered. The segment covering 14 to 24 (ATGPAGAGAAT) has biased composition (low complexity). An ABC transporter domain is found at 36–277 (IEVKNLNFFY…PARKETEDYI (242 aa)). Residue 68–75 (GPSGCGKS) participates in ATP binding.

The protein belongs to the ABC transporter superfamily. Phosphate importer (TC 3.A.1.7) family. In terms of assembly, the complex is composed of two ATP-binding proteins (PstB), two transmembrane proteins (PstC and PstA) and a solute-binding protein (PstS).

The protein localises to the cell inner membrane. It carries out the reaction phosphate(out) + ATP + H2O = ADP + 2 phosphate(in) + H(+). In terms of biological role, part of the ABC transporter complex PstSACB involved in phosphate import. Responsible for energy coupling to the transport system. This Burkholderia thailandensis (strain ATCC 700388 / DSM 13276 / CCUG 48851 / CIP 106301 / E264) protein is Phosphate import ATP-binding protein PstB.